The primary structure comprises 493 residues: Proline--tRNA ligase (493 aa).

The protein belongs to the class-II aminoacyl-tRNA synthetase family. ProS type 3 subfamily. As to quaternary structure, homodimer.

The protein resides in the cytoplasm. The enzyme catalyses tRNA(Pro) + L-proline + ATP = L-prolyl-tRNA(Pro) + AMP + diphosphate. Catalyzes the attachment of proline to tRNA(Pro) in a two-step reaction: proline is first activated by ATP to form Pro-AMP and then transferred to the acceptor end of tRNA(Pro). The chain is Proline--tRNA ligase from Porphyromonas gingivalis (strain ATCC BAA-308 / W83).